Reading from the N-terminus, the 404-residue chain is Cysteine desulfurase IscS (404 aa).

Pyridoxal 5'-phosphate is bound by residues 75-76 (AT), Asn155, Gln183, and 203-205 (SGH). Position 206 is an N6-(pyridoxal phosphate)lysine (Lys206). Thr243 provides a ligand contact to pyridoxal 5'-phosphate. The active-site Cysteine persulfide intermediate is Cys328. Cys328 is a binding site for [2Fe-2S] cluster.

It belongs to the class-V pyridoxal-phosphate-dependent aminotransferase family. NifS/IscS subfamily. In terms of assembly, homodimer. Forms a heterotetramer with IscU, interacts with other sulfur acceptors. The cofactor is pyridoxal 5'-phosphate.

Its subcellular location is the cytoplasm. The catalysed reaction is (sulfur carrier)-H + L-cysteine = (sulfur carrier)-SH + L-alanine. The protein operates within cofactor biosynthesis; iron-sulfur cluster biosynthesis. Master enzyme that delivers sulfur to a number of partners involved in Fe-S cluster assembly, tRNA modification or cofactor biosynthesis. Catalyzes the removal of elemental sulfur atoms from cysteine to produce alanine. Functions as a sulfur delivery protein for Fe-S cluster synthesis onto IscU, an Fe-S scaffold assembly protein, as well as other S acceptor proteins. This is Cysteine desulfurase IscS from Edwardsiella ictaluri (strain 93-146).